A 514-amino-acid polypeptide reads, in one-letter code: Glycosyltransferase-like At3g57200 (514 aa).

The tract at residues 1 to 23 (MAGLYSSSSSSKPTLSSSPSSSS) is disordered. The first 39 residues, 1–39 (MAGLYSSSSSSKPTLSSSPSSSSSSRLFLLVTLLPLSLA), serve as a signal peptide directing secretion. Residues asparagine 156, asparagine 187, asparagine 251, and asparagine 460 are each glycosylated (N-linked (GlcNAc...) asparagine). The segment at 457 to 514 (PSKNSSTADSTSGITRESSQETGKRRVLEFHLDVDGESQASAVPPQSPPGLEATQMEL) is disordered. Positions 458 to 473 (SKNSSTADSTSGITRE) are enriched in polar residues. The span at 474–490 (SSQETGKRRVLEFHLDV) shows a compositional bias: basic and acidic residues.

It belongs to the glycosyltransferase 25 family.

The protein localises to the secreted. It localises to the cell wall. The protein resides in the cytoplasm. It is found in the cell membrane. Functionally, involved in the coordination between cell elongation and cellulose synthesis by promoting the expression of genes involved in cell elongation and cellulose synthesis. Acts as a regulator of plasmodesmatal permeability. Maybe a glycosyltransferase. The polypeptide is Glycosyltransferase-like At3g57200 (Arabidopsis thaliana (Mouse-ear cress)).